The sequence spans 284 residues: Acetylglutamate kinase (284 aa).

Substrate contacts are provided by residues 64 to 65 (GG), Arg-86, and Asn-179.

The protein belongs to the acetylglutamate kinase family. ArgB subfamily.

It localises to the cytoplasm. It catalyses the reaction N-acetyl-L-glutamate + ATP = N-acetyl-L-glutamyl 5-phosphate + ADP. The protein operates within amino-acid biosynthesis; L-arginine biosynthesis; N(2)-acetyl-L-ornithine from L-glutamate: step 2/4. Catalyzes the ATP-dependent phosphorylation of N-acetyl-L-glutamate. This Acaryochloris marina (strain MBIC 11017) protein is Acetylglutamate kinase.